The chain runs to 422 residues: MPRSFLVKSKKAHSYHQPRSPGPDYSLRLENVPAPSRADSTSNAGGAKAEPRDRLSPESQLTEAPDRASASPDSCEGSVCERSSEFEDFWRPPSPSASPASEKSMCPSLDEAQPFPLPFKPYSWSGLAGSDLRHLVQSYRPCGALERGAGLGLFCEPAPEPGHPAALYGPKRAAGGAGAGAPGSCSAGAGATAGPGLGLYGDFGSAAAGLYERPTAAAGLLYPERGHGLHADKGAGVKVESELLCTRLLLGGGSYKCIKCSKVFSTPHGLEVHVRRSHSGTRPFACEMCGKTFGHAVSLEQHKAVHSQERSFDCKICGKSFKRSSTLSTHLLIHSDTRPYPCQYCGKRFHQKSDMKKHTFIHTGEKPHKCQVCGKAFSQSSNLITHSRKHTGFKPFGCDLCGKGFQRKVDLRRHRETQHGLK.

Residues 1 to 20 (MPRSFLVKSKKAHSYHQPRS) form an SNAG domain region. Positions 1-109 (MPRSFLVKSK…ASEKSMCPSL (109 aa)) are disordered. A phosphoserine mark is found at serine 20 and serine 56. The interval 140-257 (RPCGALERGA…LLLGGGSYKC (118 aa)) is required for interaction with RELA. 6 consecutive C2H2-type zinc fingers follow at residues 255–278 (YKCI…RRSH), 284–306 (FACE…KAVH), 312–334 (FDCK…LLIH), 340–362 (YPCQ…TFIH), 368–390 (HKCQ…SRKH), and 396–419 (FGCD…ETQH).

As to quaternary structure, interacts with U2AF1L4. Component of RCOR-GFI-KDM1A-HDAC complexes. Interacts directly with RCOR1, KDM1A and HDAC2. Also interacts with HDAC1. Interacts (via the zinc-finger domain) with ARIH2; the interaction prevents GFI1 ubiquitination and proteasomal degradation. Interacts with PIAS3; the interaction relieves the inhibitory effect of PIAS3 on STAT3-mediated transcriptional activity. Forms a complex with EHMT2 and HDAC1 to promote 'Lys-9' dimethylation of H3 (H3K9Me2) and repress expression of target genes. Interacts directly with EHMT2. Component of the GFI1-AJUBA-HDAC1 repressor complex. Interacts directly with AJUBA (via ITS LIM domains); the interaction results in the HDAC-dependent corepression of a subset of GFI1 target genes and, occurs independently of the SNAG domain. Interacts with SPI1; the interaction inhibits SPI1 transcriptional activity targeted at macrophage-specific genes, repressing macrophage differentiation of myeloid progenitor cells and promoting granulocyte commitment. Interacts with RUNX1T1; the interaction represses HDAC-mediated transcriptional activity. Interacts with RELA; the interaction occurs on liposaccharide (LPS) stimulation and controls RELA DNA binding activity and regulates endotoxin-mediated TOLL-like receptor inflammatory response. Interacts (via the C-terminal zinc fingers) with ZBTB17; the interaction results in the recruitment of GFI1 to the CDKN1A/p21 and CDKN1B promoters and repression of transcription. Ubiquitinated. Ubiquitination and degradation by the proteasome is inhibited by the ubiquitin ligase, ARIH2.

It is found in the nucleus. Transcription repressor essential for hematopoiesis. Functions in a cell-context and development-specific manner. Binds to 5'-TAAATCAC[AT]GCA-3' in the promoter region of a large number of genes. Component of several complexes, including the EHMT2-GFI1-HDAC1, AJUBA-GFI1-HDAC1 and RCOR-GFI-KDM1A-HDAC complexes, that suppress, via histone deacetylase (HDAC) recruitment, a number of genes implicated in multilineage blood cell development. Regulates neutrophil differentiation, promotes proliferation of lymphoid cells, and is required for granulocyte development. Inhibits SPI1 transcriptional activity at macrophage-specific genes, repressing macrophage differentiation of myeloid progenitor cells and promoting granulocyte commitment. Mediates, together with U2AF1L4, the alternative splicing of CD45 and controls T-cell receptor signaling. Regulates the endotoxin-mediated Toll-like receptor (TLR) inflammatory response by antagonizing RELA. Cooperates with CBFA2T2 to regulate ITGB1-dependent neurite growth. Controls cell-cycle progression by repressing CDKNIA/p21 transcription in response to TGFB1 via recruitment of GFI1 by ZBTB17 to the CDKNIA/p21 and CDKNIB promoters. Required for the maintenance of inner ear hair cells. In addition to its role in transcription, acts as a substrate adapter for PRMT1 in the DNA damage response: facilitates the recognition of TP53BP1 and MRE11 substrates by PRMT1, promoting their methylation and the DNA damage response. In Homo sapiens (Human), this protein is Zinc finger protein Gfi-1 (GFI1).